Consider the following 236-residue polypeptide: ATP synthase subunit a (236 aa).

5 consecutive transmembrane segments (helical) span residues 17 to 37, 76 to 96, 113 to 133, 170 to 190, and 196 to 216; these read WTNLISGTIVFVITFFLLFGL, SFFVFVLFVFLFISNQLGLII, PVVTMTLALCAVTLSHFAGVA, IFGNIYAGELLLKLLAGMAFS, and MIVSLPLEIIWQGFSVFIGAI.

It belongs to the ATPase A chain family. In terms of assembly, F-type ATPases have 2 components, CF(1) - the catalytic core - and CF(0) - the membrane proton channel. CF(1) has five subunits: alpha(3), beta(3), gamma(1), delta(1), epsilon(1). CF(0) has three main subunits: a(1), b(2) and c(9-12). The alpha and beta chains form an alternating ring which encloses part of the gamma chain. CF(1) is attached to CF(0) by a central stalk formed by the gamma and epsilon chains, while a peripheral stalk is formed by the delta and b chains.

The protein localises to the cell membrane. In terms of biological role, key component of the proton channel; it plays a direct role in the translocation of protons across the membrane. The chain is ATP synthase subunit a from Limosilactobacillus fermentum (strain NBRC 3956 / LMG 18251) (Lactobacillus fermentum).